We begin with the raw amino-acid sequence, 93 residues long: Large ribosomal subunit protein uL23cz/uL23cy (93 aa).

It belongs to the universal ribosomal protein uL23 family. Part of the 50S ribosomal subunit.

The protein resides in the plastid. The protein localises to the chloroplast. In terms of biological role, binds to 23S rRNA. This is Large ribosomal subunit protein uL23cz/uL23cy (rpl23-A) from Piper cenocladum (Ant piper).